Here is a 338-residue protein sequence, read N- to C-terminus: UPF0252 protein PF1496 (338 aa).

Residues 100-120 (ILSMLFLVFILFPAFTSHIWS) form a helical membrane-spanning segment.

The protein belongs to the UPF0252 family.

It is found in the membrane. This chain is UPF0252 protein PF1496, found in Pyrococcus furiosus (strain ATCC 43587 / DSM 3638 / JCM 8422 / Vc1).